The primary structure comprises 259 residues: Keratinocyte-associated transmembrane protein 2 (259 aa).

Residues 1–44 (MAASALGRMCGAAREKLSPGPGARGLGALARSLVLALLLVPVLC) form the signal peptide. Residues 45–190 (SDRSENPPNN…VKLPPPNRED (146 aa)) lie on the Extracellular side of the membrane. The interval 47 to 155 (RSENPPNNAT…YDWTTNPRDE (109 aa)) is disordered. Polar residues predominate over residues 50-81 (NPPNNATVSSPVVVTAPGNHTSPSVSQISTTL). Residues N54 and N68 are each glycosylated (N-linked (GlcNAc...) asparagine). Over residues 82–104 (SPASAEKSGSSSAAPTPTAAPSA) the composition is skewed to low complexity. Residues 105–122 (PEEEADSNEDPSMEEEDL) are compositionally biased toward acidic residues. S165 is modified (phosphoserine). The chain crosses the membrane as a helical span at residues 191-211 (SHFFFHLLIFAFCAAVVYVTY). At 212–259 (HNKRKIFLLVQSRKWRDGLCSKTVEYHRLDQNVNEAMPSLKITNDYIF) the chain is on the cytoplasmic side. Residues S223 and S250 each carry the phosphoserine modification.

It localises to the membrane. The sequence is that of Keratinocyte-associated transmembrane protein 2 (Kct2) from Mus musculus (Mouse).